Reading from the N-terminus, the 116-residue chain is Large ribosomal subunit protein uL18 (116 aa).

This sequence belongs to the universal ribosomal protein uL18 family. In terms of assembly, part of the 50S ribosomal subunit; part of the 5S rRNA/L5/L18/L25 subcomplex. Contacts the 5S and 23S rRNAs.

This is one of the proteins that bind and probably mediate the attachment of the 5S RNA into the large ribosomal subunit, where it forms part of the central protuberance. The sequence is that of Large ribosomal subunit protein uL18 from Shewanella oneidensis (strain ATCC 700550 / JCM 31522 / CIP 106686 / LMG 19005 / NCIMB 14063 / MR-1).